A 301-amino-acid chain; its full sequence is Probable alpha-L-glutamate ligase 1 (301 aa).

The ATP-grasp domain maps to 104–287 (LQLLSRKGIG…VTEPIVEYIE (184 aa)). ATP contacts are provided by residues Lys-141, 178–179 (EY), Asp-187, and 211–213 (RSN). Residues Asp-248, Glu-260, and Asn-262 each coordinate Mg(2+). Residues Asp-248, Glu-260, and Asn-262 each coordinate Mn(2+).

It belongs to the RimK family. Requires Mg(2+) as cofactor. It depends on Mn(2+) as a cofactor.

The sequence is that of Probable alpha-L-glutamate ligase 1 from Shewanella oneidensis (strain ATCC 700550 / JCM 31522 / CIP 106686 / LMG 19005 / NCIMB 14063 / MR-1).